A 370-amino-acid polypeptide reads, in one-letter code: Pulmonary surfactant-associated protein B (370 aa).

A signal peptide spans 1 to 24 (MAKSHLPPWLLLLLLPTLCGPGTA). The propeptide occupies 25–184 (VWATSPLACA…PHTQDLSAQR (160 aa)). Residues 26–66 (WATSPLACAQGPEFWCQSLEQALQCKALGHCLQEVWGHVGA) form the Saposin A-type domain. Saposin B-type domains follow at residues 66–148 (ADDL…QPGS), 188–265 (PLPL…SSVD), and 284–359 (QDPE…VATL). Intrachain disulfides connect C70-C144, C73-C138, C101-C113, C192-C261, C195-C255, C219-C230, C288-C355, C291-C349, and C314-C324. Residues 264 to 370 (VDSIGQVPPT…PLQCIQSPHF (107 aa)) constitute a propeptide that is removed on maturation. N-linked (GlcNAc...) asparagine glycosylation occurs at N300.

In terms of assembly, homodimer; disulfide-linked.

The protein resides in the secreted. Its subcellular location is the extracellular space. It localises to the surface film. In terms of biological role, pulmonary surfactant-associated proteins promote alveolar stability by lowering the surface tension at the air-liquid interface in the peripheral air spaces. SP-B increases the collapse pressure of palmitic acid to nearly 70 millinewtons per meter. The sequence is that of Pulmonary surfactant-associated protein B (SFTPB) from Oryctolagus cuniculus (Rabbit).